We begin with the raw amino-acid sequence, 329 residues long: Chlorophyllase-1, chloroplastic (329 aa).

A chloroplast-targeting transit peptide spans 1-21 (MAAMVDAKPAASVQGTPLLAT). Residues 145–149 (GHSRG) carry the GXSXG motif. Ser147 serves as the catalytic Nucleophile. Active-site charge relay system residues include Asp169 and His242.

The protein belongs to the AB hydrolase superfamily. Lipase family.

It is found in the plastid. The protein resides in the chloroplast. It catalyses the reaction a chlorophyll + H2O = a chlorophyllide + phytol + H(+). The protein operates within porphyrin-containing compound metabolism; chlorophyll degradation. Functionally, catalyzes the hydrolysis of ester bond in chlorophyll to yield chlorophyllide and phytol. The chain is Chlorophyllase-1, chloroplastic (CHLASE1) from Citrus sinensis (Sweet orange).